The primary structure comprises 488 residues: 3-octaprenyl-4-hydroxybenzoate carboxy-lyase (488 aa).

Residue Asn172 participates in Mn(2+) binding. Residues 175–177, 189–191, and 194–195 contribute to the prenylated FMN site; these read IYR, RWL, and RG. Glu238 lines the Mn(2+) pocket. Asp287 serves as the catalytic Proton donor.

This sequence belongs to the UbiD family. Homohexamer. The cofactor is prenylated FMN. It depends on Mn(2+) as a cofactor.

The protein resides in the cell membrane. It catalyses the reaction a 4-hydroxy-3-(all-trans-polyprenyl)benzoate + H(+) = a 2-(all-trans-polyprenyl)phenol + CO2. Its pathway is cofactor biosynthesis; ubiquinone biosynthesis. In terms of biological role, catalyzes the decarboxylation of 3-octaprenyl-4-hydroxy benzoate to 2-octaprenylphenol, an intermediate step in ubiquinone biosynthesis. The chain is 3-octaprenyl-4-hydroxybenzoate carboxy-lyase from Stutzerimonas stutzeri (strain A1501) (Pseudomonas stutzeri).